Here is a 93-residue protein sequence, read N- to C-terminus: Integration host factor subunit beta (93 aa).

The protein belongs to the bacterial histone-like protein family. In terms of assembly, heterodimer of an alpha and a beta chain.

Its function is as follows. This protein is one of the two subunits of integration host factor, a specific DNA-binding protein that functions in genetic recombination as well as in transcriptional and translational control. The chain is Integration host factor subunit beta from Vibrio vulnificus (strain YJ016).